The following is a 344-amino-acid chain: Heat-inducible transcription repressor HrcA (344 aa).

The protein belongs to the HrcA family.

Negative regulator of class I heat shock genes (grpE-dnaK-dnaJ and groELS operons). Prevents heat-shock induction of these operons. The protein is Heat-inducible transcription repressor HrcA of Streptococcus agalactiae serotype Ia (strain ATCC 27591 / A909 / CDC SS700).